Here is a 128-residue protein sequence, read N- to C-terminus: UPF0212 protein TGAM_1344 (128 aa).

The protein belongs to the UPF0212 family.

This is UPF0212 protein TGAM_1344 from Thermococcus gammatolerans (strain DSM 15229 / JCM 11827 / EJ3).